The primary structure comprises 497 residues: Proline--tRNA ligase (497 aa).

The protein belongs to the class-II aminoacyl-tRNA synthetase family. ProS type 3 subfamily. Homodimer.

It is found in the cytoplasm. The catalysed reaction is tRNA(Pro) + L-proline + ATP = L-prolyl-tRNA(Pro) + AMP + diphosphate. Functionally, catalyzes the attachment of proline to tRNA(Pro) in a two-step reaction: proline is first activated by ATP to form Pro-AMP and then transferred to the acceptor end of tRNA(Pro). This chain is Proline--tRNA ligase, found in Bacteroides fragilis (strain ATCC 25285 / DSM 2151 / CCUG 4856 / JCM 11019 / LMG 10263 / NCTC 9343 / Onslow / VPI 2553 / EN-2).